The following is a 766-amino-acid chain: EMILIN-3 (766 aa).

The first 22 residues, 1–22 (MGRRRLLVWLCAVAALLSGAQA), serve as a signal peptide directing secretion. One can recognise an EMI domain in the interval 55–131 (HKALCAYVVH…PGFTGKRCPE (77 aa)). 3 disulfide bridges follow: Cys59-Cys121, Cys86-Cys92, and Cys120-Cys129. The N-linked (GlcNAc...) asparagine glycan is linked to Asn66. Positions 132 to 179 (HLTDHGAASPQLEPEPQIPSGQLDPGPRPPSYSRAAPSPHGRKGPGLF) are disordered. Asn443 carries an N-linked (GlcNAc...) asparagine glycan. Residues 467–491 (GTMLEERVQSLEERLATLAGELSHD) adopt a coiled-coil conformation. Residues Asn562, Asn616, and Asn732 are each glycosylated (N-linked (GlcNAc...) asparagine). 2 coiled-coil regions span residues 615-663 (ANTS…QLKA) and 726-761 (SHVD…EQVR).

The protein localises to the secreted. It localises to the extracellular space. It is found in the extracellular matrix. The chain is EMILIN-3 (EMILIN3) from Homo sapiens (Human).